Consider the following 1995-residue polypeptide: uncharacterized protein (1995 aa).

Transmembrane regions (helical) follow at residues 31-51 (NYTE…EFFK), 53-73 (FFSF…PDIA), 106-126 (LVIF…ILPT), 157-177 (FLWL…WLSL), 212-232 (IFLL…PFIS), 254-274 (FLLI…SLLQ), and 307-327 (ILNF…IPYY). Disordered regions lie at residues 1418-1441 (SLKK…HQFS) and 1848-1883 (DLRW…KTNP). 2 stretches are compositionally biased toward basic residues: residues 1422 to 1441 (SQIK…HQFS) and 1853 to 1863 (PSSRTKQKRKD).

It belongs to the ycf78 family.

The protein localises to the plastid. Its subcellular location is the chloroplast membrane. Functionally, essential for cell growth. May be involved in binding chloroplast DNA to either the chloroplast envelope or the thylakoid membrane. This is an uncharacterized protein from Chlamydomonas reinhardtii (Chlamydomonas smithii).